The primary structure comprises 301 residues: Ribonuclease Z (301 aa).

The Zn(2+) site is built by His61, His63, Asp65, His66, His140, Asp211, and His269. The Proton acceptor role is filled by Asp65.

This sequence belongs to the RNase Z family. Homodimer. Zn(2+) is required as a cofactor.

It carries out the reaction Endonucleolytic cleavage of RNA, removing extra 3' nucleotides from tRNA precursor, generating 3' termini of tRNAs. A 3'-hydroxy group is left at the tRNA terminus and a 5'-phosphoryl group is left at the trailer molecule.. In terms of biological role, zinc phosphodiesterase, which displays some tRNA 3'-processing endonuclease activity. Probably involved in tRNA maturation, by removing a 3'-trailer from precursor tRNA. The chain is Ribonuclease Z from Bradyrhizobium sp. (strain ORS 278).